The sequence spans 92 residues: MTRSIKKGPFVDAHLQKKVDEQNEKGTKNVIKTWSRRSMITPDFIGHTFAVHDGRKHVPVFVTEAMVGHKLGEFAPTKTFKGHVKDDKKARR.

Belongs to the universal ribosomal protein uS19 family.

In terms of biological role, protein S19 forms a complex with S13 that binds strongly to the 16S ribosomal RNA. This is Small ribosomal subunit protein uS19 from Bifidobacterium longum subsp. infantis (strain ATCC 15697 / DSM 20088 / JCM 1222 / NCTC 11817 / S12).